We begin with the raw amino-acid sequence, 272 residues long: Cyclase-like protein 2 (272 aa).

Positions Met1–Ala24 are cleaved as a signal peptide.

The protein belongs to the Cyclase 1 superfamily.

It localises to the secreted. The protein resides in the extracellular space. Its subcellular location is the extracellular matrix. Its function is as follows. May function redundantly with CYCLASE1 for normal plant growth, development and viability. The protein is Cyclase-like protein 2 of Arabidopsis thaliana (Mouse-ear cress).